The following is a 509-amino-acid chain: Ankyrin repeat domain-containing protein 13C (509 aa).

Basic and acidic residues predominate over residues 1-19 (MTGEKIRSLHRDQKPSKDE). Positions 1–42 (MTGEKIRSLHRDQKPSKDEDLLEPDEEATAGGTFTRTGKLKN) are disordered. ANK repeat units lie at residues 79–110 (DAYFPVHECVFKGDIRRLSSLIRSHSIGQKDN), 111–140 (HGNTPLHLAVMLGNKECAHLLLAHNAPVKV), and 144–173 (QGWSPLAEAISYGDRQMITALLRKLKQQSR).

It localises to the endoplasmic reticulum membrane. In terms of biological role, acts as a molecular chaperone for G protein-coupled receptors, regulating their biogenesis and exit from the ER. The chain is Ankyrin repeat domain-containing protein 13C (ankrd13c) from Xenopus tropicalis (Western clawed frog).